The sequence spans 36 residues: Zinc metalloproteinase-disintegrin-like VaH1 (36 aa).

The Peptidase M12B domain occupies 1–36 (MVTKYSSIFMSPILSNPPILYFSDCSREXYQKXLTN).

The protein belongs to the venom metalloproteinase (M12B) family. P-III subfamily. P-IIIa sub-subfamily. In terms of assembly, monomer. The cofactor is Zn(2+). Post-translationally, the N-terminus is blocked. In terms of processing, glycosylated. Expressed by the venom gland.

It is found in the secreted. With respect to regulation, inhibited by EDTA, but not inhibited by iodoacetamide, PMSF and pepstatin A. Its function is as follows. Snake venom zinc metalloprotease that exhibits strong hemorrhagic activity. It also degrades alpha-chain of fibrinogen (FGA), but not the beta- and the gamma-chains. Possesses potent azocaseinolytic activity and cleaves insulin B-chain, hydrolyzing it at positions Ala(14)-Leu(15), followed by Tyr(16)-Leu(17) and His(10)-Leu(11). In vivo, subcutaneous injection into mice induces strong hemorrhage. The polypeptide is Zinc metalloproteinase-disintegrin-like VaH1 (Vipera ammodytes ammodytes (Western sand viper)).